Reading from the N-terminus, the 363-residue chain is 3-dehydroquinate synthase (363 aa).

Residues 134–135 (TT), lysine 147, lysine 156, and 174–177 (TLKT) contribute to the NAD(+) site. Residues glutamate 189, histidine 254, and histidine 271 each coordinate Zn(2+).

It belongs to the sugar phosphate cyclases superfamily. Dehydroquinate synthase family. The cofactor is Co(2+). Zn(2+) serves as cofactor. It depends on NAD(+) as a cofactor.

The protein resides in the cytoplasm. The catalysed reaction is 7-phospho-2-dehydro-3-deoxy-D-arabino-heptonate = 3-dehydroquinate + phosphate. It functions in the pathway metabolic intermediate biosynthesis; chorismate biosynthesis; chorismate from D-erythrose 4-phosphate and phosphoenolpyruvate: step 2/7. Its function is as follows. Catalyzes the conversion of 3-deoxy-D-arabino-heptulosonate 7-phosphate (DAHP) to dehydroquinate (DHQ). The protein is 3-dehydroquinate synthase of Prochlorococcus marinus (strain MIT 9515).